The sequence spans 195 residues: Imidazoleglycerol-phosphate dehydratase (195 aa).

It belongs to the imidazoleglycerol-phosphate dehydratase family.

The protein resides in the cytoplasm. It catalyses the reaction D-erythro-1-(imidazol-4-yl)glycerol 3-phosphate = 3-(imidazol-4-yl)-2-oxopropyl phosphate + H2O. It participates in amino-acid biosynthesis; L-histidine biosynthesis; L-histidine from 5-phospho-alpha-D-ribose 1-diphosphate: step 6/9. This is Imidazoleglycerol-phosphate dehydratase from Burkholderia thailandensis (strain ATCC 700388 / DSM 13276 / CCUG 48851 / CIP 106301 / E264).